We begin with the raw amino-acid sequence, 296 residues long: GTPase Era (296 aa).

Positions 3-170 (KSGFVTIVGR…KELMFKYIPE (168 aa)) constitute an Era-type G domain. The interval 11-18 (GRPNVGKS) is G1. 11 to 18 (GRPNVGKS) is a binding site for GTP. The tract at residues 37-41 (QTTRN) is G2. A G3 region spans residues 58–61 (DTPG). Residues 58-62 (DTPGI) and 120-123 (NKID) each bind GTP. Residues 120–123 (NKID) are G4. Residues 149-151 (ISA) are G5. A KH type-2 domain is found at 201-278 (LSEEVPHGIA…YIRLWVKVKE (78 aa)).

It belongs to the TRAFAC class TrmE-Era-EngA-EngB-Septin-like GTPase superfamily. Era GTPase family. Monomer.

Its subcellular location is the cytoplasm. The protein resides in the cell membrane. An essential GTPase that binds both GDP and GTP, with rapid nucleotide exchange. Plays a role in 16S rRNA processing and 30S ribosomal subunit biogenesis and possibly also in cell cycle regulation and energy metabolism. The sequence is that of GTPase Era from Clostridium botulinum (strain ATCC 19397 / Type A).